Here is a 115-residue protein sequence, read N- to C-terminus: Envelope glycoprotein N (115 aa).

An N-terminal signal peptide occupies residues 1–27 (MWLLRPAGSNFIVALIVLACAGPLTCS). The Virion surface portion of the chain corresponds to 28-77 (AQLDAGILNPWGSAGHNDAVMPGMFANSESDERFYSPHCSSRGLPLVNES). Residues 78-98 (MASVIFFLSLAMVCVAIVAIL) form a helical membrane-spanning segment. Topologically, residues 99–115 (YNCCFNSFKNSVINSRW) are intravirion.

It belongs to the herpesviridae glycoprotein N family. Interacts (via N-terminus) with gM (via N-terminus). The gM-gN heterodimer forms the gCII complex.

The protein resides in the virion membrane. It is found in the host membrane. It localises to the host Golgi apparatus. Its subcellular location is the host trans-Golgi network. Functionally, envelope glycoprotein necessary for proper maturation of gM and modulation of its membrane fusion activity. Also plays a critical role in virion morphogenesis. The protein is Envelope glycoprotein N of Psittacid herpesvirus 1 (isolate Amazon parrot/-/97-0001/1997) (PsHV-1).